An 83-amino-acid chain; its full sequence is Cytochrome c oxidase subunit 7A2, mitochondrial (83 aa).

Residues 1-23 (MLRNLLALRQIAQRTISTTSRRH) constitute a mitochondrion transit peptide. Topologically, residues 24–48 (FENKVPEKQKLFQEDNGMPVHLKGG) are mitochondrial matrix. An N6-acetyllysine modification is found at Lys33. The helical transmembrane segment at 49-77 (ASDALLYRATMALTLGGTAYAIYLLAMAA) threads the bilayer. Residues 78–83 (FPKKQN) are Mitochondrial intermembrane-facing.

It belongs to the cytochrome c oxidase VIIa family. In terms of assembly, component of the cytochrome c oxidase (complex IV, CIV), a multisubunit enzyme composed of 14 subunits. The complex is composed of a catalytic core of 3 subunits MT-CO1, MT-CO2 and MT-CO3, encoded in the mitochondrial DNA, and 11 supernumerary subunits COX4I, COX5A, COX5B, COX6A, COX6B, COX6C, COX7A, COX7B, COX7C, COX8 and NDUFA4, which are encoded in the nuclear genome. The complex exists as a monomer or a dimer and forms supercomplexes (SCs) in the inner mitochondrial membrane with NADH-ubiquinone oxidoreductase (complex I, CI) and ubiquinol-cytochrome c oxidoreductase (cytochrome b-c1 complex, complex III, CIII), resulting in different assemblies (supercomplex SCI(1)III(2)IV(1) and megacomplex MCI(2)III(2)IV(2)). Interacts with PET100.

The protein resides in the mitochondrion inner membrane. The protein operates within energy metabolism; oxidative phosphorylation. Its function is as follows. Component of the cytochrome c oxidase, the last enzyme in the mitochondrial electron transport chain which drives oxidative phosphorylation. The respiratory chain contains 3 multisubunit complexes succinate dehydrogenase (complex II, CII), ubiquinol-cytochrome c oxidoreductase (cytochrome b-c1 complex, complex III, CIII) and cytochrome c oxidase (complex IV, CIV), that cooperate to transfer electrons derived from NADH and succinate to molecular oxygen, creating an electrochemical gradient over the inner membrane that drives transmembrane transport and the ATP synthase. Cytochrome c oxidase is the component of the respiratory chain that catalyzes the reduction of oxygen to water. Electrons originating from reduced cytochrome c in the intermembrane space (IMS) are transferred via the dinuclear copper A center (CU(A)) of subunit 2 and heme A of subunit 1 to the active site in subunit 1, a binuclear center (BNC) formed by heme A3 and copper B (CU(B)). The BNC reduces molecular oxygen to 2 water molecules using 4 electrons from cytochrome c in the IMS and 4 protons from the mitochondrial matrix. In Mus musculus (Mouse), this protein is Cytochrome c oxidase subunit 7A2, mitochondrial (Cox7a2).